Reading from the N-terminus, the 130-residue chain is HTH-type transcriptional regulator KmtR (130 aa).

The HTH arsR-type domain occupies 10 to 104 (LPDDQVCLVV…DAVFNAEHAG (95 aa)). The H-T-H motif DNA-binding region spans 44 to 67 (VNELAEQVGKPAPSVSQHLAKLRM). The segment at 110–130 (HHRAAGGLQSVAKASATKDVG) is disordered.

With respect to regulation, binding to DNA is inhibited by nickel and cobalt ions. In terms of biological role, represses expression of Rv2025c and its own expression. Acts by binding to the promoter regions. The protein is HTH-type transcriptional regulator KmtR (kmtR) of Mycobacterium tuberculosis (strain ATCC 25618 / H37Rv).